A 160-amino-acid polypeptide reads, in one-letter code: Inorganic pyrophosphatase (160 aa).

Positions 16, 28, and 40 each coordinate substrate. Mg(2+)-binding residues include Asp-50, Asp-55, and Asp-87. Tyr-126 lines the substrate pocket.

It belongs to the PPase family. As to quaternary structure, homohexamer. Mg(2+) is required as a cofactor.

It is found in the cytoplasm. The enzyme catalyses diphosphate + H2O = 2 phosphate + H(+). Functionally, catalyzes the hydrolysis of inorganic pyrophosphate (PPi) forming two phosphate ions. The protein is Inorganic pyrophosphatase of Nanoarchaeum equitans (strain Kin4-M).